A 106-amino-acid chain; its full sequence is ATP-dependent Clp protease adapter protein ClpS (106 aa).

This sequence belongs to the ClpS family. Binds to the N-terminal domain of the chaperone ClpA.

Functionally, involved in the modulation of the specificity of the ClpAP-mediated ATP-dependent protein degradation. This is ATP-dependent Clp protease adapter protein ClpS from Escherichia fergusonii (strain ATCC 35469 / DSM 13698 / CCUG 18766 / IAM 14443 / JCM 21226 / LMG 7866 / NBRC 102419 / NCTC 12128 / CDC 0568-73).